A 310-amino-acid polypeptide reads, in one-letter code: Ribosomal protein L11 methyltransferase (310 aa).

4 residues coordinate S-adenosyl-L-methionine: threonine 156, glycine 179, aspartate 201, and asparagine 246.

Belongs to the methyltransferase superfamily. PrmA family.

It is found in the cytoplasm. The enzyme catalyses L-lysyl-[protein] + 3 S-adenosyl-L-methionine = N(6),N(6),N(6)-trimethyl-L-lysyl-[protein] + 3 S-adenosyl-L-homocysteine + 3 H(+). Its function is as follows. Methylates ribosomal protein L11. This Desulfatibacillum aliphaticivorans protein is Ribosomal protein L11 methyltransferase.